The chain runs to 280 residues: Protein FLOURY 1-like (280 aa).

A helical membrane pass occupies residues 22-42 (GFGFGIFVIGCSSQFFNLVFL). The disordered stretch occupies residues 153–187 (VALSETELDEKNHHGEEEESEDEEESQSQNDEDQL). Acidic residues predominate over residues 169–187 (EEESEDEEESQSQNDEDQL). Residues 188–280 (LDVITLRTMV…LDDDEDKIQM (93 aa)) form the GTD-binding domain.

It is found in the membrane. This Arabidopsis thaliana (Mouse-ear cress) protein is Protein FLOURY 1-like.